Here is a 301-residue protein sequence, read N- to C-terminus: MPINIPNGLPAASVLAGEQIFVMTEERATHQDIRPLTLLFLNLMPKKIATEIQYMRKLSNTPLQVNIDLLRVDKHISKNTPQPHLDTFYKDFEEIEGRNYDGMIITGAPLDQIDFSDVTYWDKLEKIITWSKEHVTSTLFSCWGVAAGLKIFYDLPLINRKEKLSGVFLHHTAQSLNPLIRGFDDTFLAPHSRFIDFPSDVIRKHTDLEILADSEITGMFLAATPDRRQVFVTGHPEYDATTLSDEYRRDLAAGKDPKLPENYFPHDDPTQIPSCVWRSHASLLFGNWLNYYVYQITPYKW.

The Acyl-thioester intermediate role is filled by Cys142. Residues Lys163 and Ser192 each contribute to the substrate site. His235 (proton acceptor) is an active-site residue. Residue Glu237 is part of the active site. Residue Arg249 participates in substrate binding.

The protein belongs to the MetA family.

It localises to the cytoplasm. The enzyme catalyses L-homoserine + acetyl-CoA = O-acetyl-L-homoserine + CoA. Its pathway is amino-acid biosynthesis; L-methionine biosynthesis via de novo pathway; O-acetyl-L-homoserine from L-homoserine: step 1/1. In terms of biological role, transfers an acetyl group from acetyl-CoA to L-homoserine, forming acetyl-L-homoserine. The sequence is that of Homoserine O-acetyltransferase from Succinatimonas hippei (strain DSM 22608 / JCM 16073 / KCTC 15190 / YIT 12066).